A 219-amino-acid chain; its full sequence is Mucosal pentraxin (219 aa).

Residues Met1–Ala19 form the signal peptide. In terms of domain architecture, Pentraxin (PTX) spans Lys24–Pro219. A glycan (N-linked (GlcNAc...) asparagine) is linked at Asn51. Cys55 and Cys114 are disulfide-bonded. Residues Asp77, Asn78, Glu155, Gln156, Asp157, and Gln167 each contribute to the Ca(2+) site.

The protein belongs to the pentraxin family. Homopentamer. Pentraxin (or pentaxin) have a discoid arrangement of 5 non-covalently bound subunits. Requires Ca(2+) as cofactor. Expressed in colon.

The protein resides in the secreted. The polypeptide is Mucosal pentraxin (Mptx1) (Mus musculus (Mouse)).